The primary structure comprises 213 residues: Heterochromatin protein 1 (213 aa).

Disordered regions lie at residues 1 to 24 and 74 to 151; these read MGKKTDNPETNNASSGAEEEEEEY and RKDE…TGFD. The Chromo 1 domain maps to 24–82; it reads YAVEKILDRRVRKGKVEYYLKWKGYAETENTWEPEGNLDCQDLIQQYELSRKDEANAAA. Over residues 89 to 104 the composition is skewed to basic and acidic residues; that stretch reads SKKERPGSSTKVKETG. Positions 105–115 are enriched in polar residues; the sequence is RTSTTASNSSG. The 59-residue stretch at 154–212 folds into the Chromo 2 domain; sequence LEAEKILGASDNNGRLTFLIQFKGVDQAEMVPSTVANVKIPQMVIRFYEERLSWYSDNE.

It is found in the nucleus. Its function is as follows. Structural component of heterochromatin, involved in gene repression and the modification of position-effect-variegation. Recognizes and binds histone H3 tails methylated at 'Lys-9', leading to epigenetic repression. This is Heterochromatin protein 1 (HP1A) from Drosophila virilis (Fruit fly).